Reading from the N-terminus, the 104-residue chain is Cytochrome c-552 (104 aa).

The signal sequence occupies residues methionine 1–alanine 23. Heme c is bound by residues cysteine 37, cysteine 40, histidine 41, and methionine 82.

This sequence belongs to the cytochrome c family. In terms of assembly, monoheme monomer. Has the tendency to dimerize. Post-translationally, binds 1 heme c group covalently per subunit.

The protein resides in the periplasm. The polypeptide is Cytochrome c-552 (cycB) (Bradyrhizobium diazoefficiens (strain JCM 10833 / BCRC 13528 / IAM 13628 / NBRC 14792 / USDA 110)).